A 418-amino-acid chain; its full sequence is Protein SSXT (418 aa).

S2 is subject to N-acetylserine. A transcriptional activation region spans residues 2–186 (SVAFAAPRQR…NQMTMSQGQP (185 aa)). The short motif at 50 to 53 (YQQM) is the SH2-binding element. 2 disordered regions span residues 77-118 (APPT…PAPH) and 188-418 (GNYG…NYQQ). A compositionally biased stretch (low complexity) spans 225 to 251 (YQGQQPPMGMMGQVNQGNHMMGQRQIP). Residues 309 to 318 (GYDRPYEDSS) are compositionally biased toward basic and acidic residues. Composition is skewed to low complexity over residues 328-337 (QYGQQQDAYQ), 345-366 (YPPQ…QGYG), and 376-393 (YPNY…YRPT). Repeat copies occupy residues 344-356 (GYPP…PGQQ) and 357-369 (GYPG…GPSQ). The 2 X 13 AA imperfect tandem repeats stretch occupies residues 344–369 (GYPPQQQQYPGQQGYPGQQQGYGPSQ). Residues 374 to 377 (PQYP) carry the SH2-binding motif. Positions 392–401 (PTQPGPPQPP) match the SH3-binding motif. The segment covering 394–403 (QPGPPQPPQQ) has biased composition (pro residues). Positions 404–418 (RPYGYDQGQYGNYQQ) are enriched in low complexity. The SH2-binding signature appears at 413–416 (YGNY).

This sequence belongs to the SS18 family. As to quaternary structure, interacts with MLLT10. Isoform 1 interacts with RBM14 isoform 1. Isoform 2 interacts with RBM14 isoform 1. Component of the multiprotein chromatin-remodeling complexes SWI/SNF: SWI/SNF-A (BAF), SWI/SNF-B (PBAF) and related complexes. The canonical complex contains a catalytic subunit (either SMARCA4/BRG1/BAF190A or SMARCA2/BRM/BAF190B) and at least SMARCE1, ACTL6A/BAF53, SMARCC1/BAF155, SMARCC2/BAF170, and SMARCB1/SNF5/BAF47. Other subunits specific to each of the complexes may also be present permitting several possible combinations developmentally and tissue specific. Component of the SWI/SNF (GBAF) subcomplex, which includes at least BICRA or BICRAL (mutually exclusive), BRD9, SS18, the core BAF subunits, SMARCA2/BRM, SMARCA4/BRG1/BAF190A, ACTL6A/BAF53, SMARCC1/BAF155, and SMARCD1/BAF60A. As to expression, fairly ubiquitously expressed. Expressed in synovial sarcomas and in other human cell lines. The fusion genes SSXT-SSX1 and SSXT-SSX2 are expressed only in synovial sarcomas.

Its subcellular location is the nucleus. Functionally, appears to function synergistically with RBM14 as a transcriptional coactivator. Isoform 1 and isoform 2 function in nuclear receptor coactivation. Isoform 1 and isoform 2 function in general transcriptional coactivation. Component of SWI/SNF chromatin remodeling subcomplex GBAF that carries out key enzymatic activities, changing chromatin structure by altering DNA-histone contacts within a nucleosome in an ATP-dependent manner. This chain is Protein SSXT (SS18), found in Homo sapiens (Human).